Reading from the N-terminus, the 256-residue chain is MAWSAQQYLKFEDERTRPARDLLAQVPLERVLNGYDLGCGPGNSTELLTDRYGVNVITGIDSDDDMLEKAADRLPNTNFGKADLATWKPAQKADLLYANAVFQWVPDHLAVLSQLMDQLESGGVLAVQMPDNLQEPTHIAMHETADGGPWKDAFSGGGLRRKPLPPPSDYFNALSPKSSRVDVWHTVYNHPMKDADSIVEWVKGTGLRPYLAAAGEENREAFLADYTRRIAAAYPPMADGRLLLRFPRLFVVAVKK.

It belongs to the methyltransferase superfamily. Tam family.

It is found in the cytoplasm. It carries out the reaction trans-aconitate + S-adenosyl-L-methionine = (E)-3-(methoxycarbonyl)pent-2-enedioate + S-adenosyl-L-homocysteine. Functionally, catalyzes the S-adenosylmethionine monomethyl esterification of trans-aconitate. The sequence is that of Trans-aconitate 2-methyltransferase from Agrobacterium fabrum (strain C58 / ATCC 33970) (Agrobacterium tumefaciens (strain C58)).